The primary structure comprises 508 residues: Maturase K (508 aa).

Belongs to the intron maturase 2 family. MatK subfamily.

It is found in the plastid. Its subcellular location is the chloroplast. Its function is as follows. Usually encoded in the trnK tRNA gene intron. Probably assists in splicing its own and other chloroplast group II introns. This chain is Maturase K, found in Coronilla varia (Crown vetch).